Consider the following 579-residue polypeptide: MAEQKIISLFDDDACTRYTILIASTIGEMREKKESIIDNTDPEIVKYLSQLLDVFRENFDTWAMAVVNRTGCALDPSTPKDQVEVKKFRQFSETEKSECFIKCLLLLILSLGNYSPYSRNLLYSIAEKLGLSSIVVYKAELITSSMLLDTFQTMESNQEMYELSGTRKMRRRIAMGLAGLAGGALIGLTGGLAAPFVAAGLGTLFAGLGLGTMIGATYLGTLITSAPMITALFGGFGAKMSMQQMGDVSKGLTDFEFIPLSVQSHLPVTIGISGWLGDYNEVDAAWKSLTVGDKSYYWGDIYALKFEVEALVDLGKSLSRILFSAGLGWVKGEVISRTILAPLAAALWPLSLLKVGNILGNSWRIAFNLSIKAGEALANALCVRAQGMRPVTLIGFSLGARTILECLLHLADRGETNLVENVIVMGAPMPTDAKLWLKMRCVVAGRFVNVYSASDYVLQLVYRVNSAQSTAAGLGPVSLDSNTLENVDVGDLVEGHLQYRWLVAKILKERLGYDNISDAEIQSLAVQEEKYESKQRTYYSQKEQEEEIEQEVLFDASSDTELAIQKKEDEVNEVRENKK.

3 helical membrane passes run isoleucine 173–alanine 193, phenylalanine 196–alanine 216, and tyrosine 218–alanine 238.

The protein belongs to the TMCO4 family.

Its subcellular location is the cytoplasm. It localises to the nucleus membrane. This is an uncharacterized protein from Schizosaccharomyces pombe (strain 972 / ATCC 24843) (Fission yeast).